Reading from the N-terminus, the 167-residue chain is Transcription antitermination protein NusB (167 aa).

Positions 1 to 32 (MSDTPETGKPAAGTKPAARTEAKAPPKSARRR) are disordered.

It belongs to the NusB family.

Functionally, involved in transcription antitermination. Required for transcription of ribosomal RNA (rRNA) genes. Binds specifically to the boxA antiterminator sequence of the ribosomal RNA (rrn) operons. The polypeptide is Transcription antitermination protein NusB (Cupriavidus pinatubonensis (strain JMP 134 / LMG 1197) (Cupriavidus necator (strain JMP 134))).